The sequence spans 351 residues: Protein RecA (351 aa).

73–80 is an ATP binding site; sequence GPESSGKT.

This sequence belongs to the RecA family.

It localises to the cytoplasm. In terms of biological role, can catalyze the hydrolysis of ATP in the presence of single-stranded DNA, the ATP-dependent uptake of single-stranded DNA by duplex DNA, and the ATP-dependent hybridization of homologous single-stranded DNAs. It interacts with LexA causing its activation and leading to its autocatalytic cleavage. This Oleidesulfovibrio alaskensis (strain ATCC BAA-1058 / DSM 17464 / G20) (Desulfovibrio alaskensis) protein is Protein RecA.